We begin with the raw amino-acid sequence, 128 residues long: Small ribosomal subunit protein uS9 (128 aa).

It belongs to the universal ribosomal protein uS9 family.

The sequence is that of Small ribosomal subunit protein uS9 from Christiangramia forsetii (strain DSM 17595 / CGMCC 1.15422 / KT0803) (Gramella forsetii).